A 784-amino-acid chain; its full sequence is LPS-assembly protein LptD (784 aa).

Positions 1–24 (MKKRIPTLLATMIATALYSQQGLA) are cleaved as a signal peptide. 2 disulfide bridges follow: Cys-31–Cys-724 and Cys-173–Cys-725.

This sequence belongs to the LptD family. In terms of assembly, component of the lipopolysaccharide transport and assembly complex. Interacts with LptE and LptA. Contains two intramolecular disulfide bonds.

It is found in the cell outer membrane. Together with LptE, is involved in the assembly of lipopolysaccharide (LPS) at the surface of the outer membrane. This is LPS-assembly protein LptD from Shigella sonnei (strain Ss046).